The primary structure comprises 282 residues: NADPH-dependent 7-cyano-7-deazaguanine reductase (282 aa).

82 to 84 is a binding site for substrate; the sequence is IES. An NADPH-binding site is contributed by 84–85; it reads SK. The Thioimide intermediate role is filled by cysteine 189. Aspartate 196 acts as the Proton donor in catalysis. 228-229 contacts substrate; that stretch reads HE. An NADPH-binding site is contributed by 257–258; the sequence is RG.

Belongs to the GTP cyclohydrolase I family. QueF type 2 subfamily. Homodimer.

The protein localises to the cytoplasm. The catalysed reaction is 7-aminomethyl-7-carbaguanine + 2 NADP(+) = 7-cyano-7-deazaguanine + 2 NADPH + 3 H(+). It functions in the pathway tRNA modification; tRNA-queuosine biosynthesis. Catalyzes the NADPH-dependent reduction of 7-cyano-7-deazaguanine (preQ0) to 7-aminomethyl-7-deazaguanine (preQ1). This Delftia acidovorans (strain DSM 14801 / SPH-1) protein is NADPH-dependent 7-cyano-7-deazaguanine reductase.